Reading from the N-terminus, the 396-residue chain is Putative arsenical pump-driving ATPase 1 (396 aa).

8 to 15 lines the ATP pocket; that stretch reads GKGGVGKT.

Belongs to the arsA ATPase family.

The enzyme catalyses arsenite(in) + ATP + H2O = arsenite(out) + ADP + phosphate + H(+). Its function is as follows. Anion-transporting ATPase. Catalyzes the extrusion of arsenite. The polypeptide is Putative arsenical pump-driving ATPase 1 (arsA1) (Aquifex aeolicus (strain VF5)).